Here is a 488-residue protein sequence, read N- to C-terminus: 3-octaprenyl-4-hydroxybenzoate carboxy-lyase (488 aa).

N172 is a Mn(2+) binding site. Prenylated FMN-binding positions include I175–R177, R189–L191, and R194–G195. E238 contacts Mn(2+). D287 functions as the Proton donor in the catalytic mechanism.

Belongs to the UbiD family. Homohexamer. Prenylated FMN serves as cofactor. Mn(2+) is required as a cofactor.

Its subcellular location is the cell membrane. The enzyme catalyses a 4-hydroxy-3-(all-trans-polyprenyl)benzoate + H(+) = a 2-(all-trans-polyprenyl)phenol + CO2. Its pathway is cofactor biosynthesis; ubiquinone biosynthesis. Functionally, catalyzes the decarboxylation of 3-octaprenyl-4-hydroxy benzoate to 2-octaprenylphenol, an intermediate step in ubiquinone biosynthesis. The protein is 3-octaprenyl-4-hydroxybenzoate carboxy-lyase of Shewanella oneidensis (strain ATCC 700550 / JCM 31522 / CIP 106686 / LMG 19005 / NCIMB 14063 / MR-1).